Consider the following 319-residue polypeptide: Phosphoenolpyruvate transferase (319 aa).

A 7,8-didemethyl-8-hydroxy-5-deazariboflavin-binding site is contributed by D50.

The protein belongs to the CofD family. In terms of assembly, homodimer. Mg(2+) serves as cofactor.

It carries out the reaction enolpyruvoyl-2-diphospho-5'-guanosine + 7,8-didemethyl-8-hydroxy-5-deazariboflavin = dehydro coenzyme F420-0 + GMP + H(+). Its pathway is cofactor biosynthesis; coenzyme F420 biosynthesis. Catalyzes the transfer of the phosphoenolpyruvate moiety from enoylpyruvoyl-2-diphospho-5'-guanosine (EPPG) to 7,8-didemethyl-8-hydroxy-5-deazariboflavin (FO) with the formation of dehydro coenzyme F420-0 and GMP. The sequence is that of Phosphoenolpyruvate transferase from Streptomyces coelicolor (strain ATCC BAA-471 / A3(2) / M145).